The primary structure comprises 202 residues: dITP/XTP pyrophosphatase (202 aa).

Thr10–Lys15 lines the substrate pocket. Mg(2+) contacts are provided by Asp46 and Asp75. Residue Asp75 is the Proton acceptor of the active site. Substrate is bound by residues Ser76, Phe160 to Asp163, Lys183, and His188 to Arg189.

Belongs to the HAM1 NTPase family. Homodimer. Requires Mg(2+) as cofactor.

The catalysed reaction is XTP + H2O = XMP + diphosphate + H(+). The enzyme catalyses dITP + H2O = dIMP + diphosphate + H(+). It carries out the reaction ITP + H2O = IMP + diphosphate + H(+). In terms of biological role, pyrophosphatase that catalyzes the hydrolysis of nucleoside triphosphates to their monophosphate derivatives, with a high preference for the non-canonical purine nucleotides XTP (xanthosine triphosphate), dITP (deoxyinosine triphosphate) and ITP. Seems to function as a house-cleaning enzyme that removes non-canonical purine nucleotides from the nucleotide pool, thus preventing their incorporation into DNA/RNA and avoiding chromosomal lesions. This Idiomarina loihiensis (strain ATCC BAA-735 / DSM 15497 / L2-TR) protein is dITP/XTP pyrophosphatase.